Reading from the N-terminus, the 373-residue chain is CASP-like protein UU6 (373 aa).

Disordered regions lie at residues 1 to 100 (MGTL…GSEG) and 172 to 195 (TKET…PKKK). The Cytoplasmic portion of the chain corresponds to 1–204 (MGTLTDPTVD…KHRLRKHLTA (204 aa)). Over residues 56–74 (KTNTGNAAESTASTENGET) the composition is skewed to polar residues. Residues 205 to 225 (IGAYSFAFRFSETVLSLIAIV) traverse the membrane as a helical segment. Over 226 to 253 (VMCSTRGSMRTDGVDFGTLKFNHFQAYR) the chain is Extracellular. Residues 254-274 (YLVAVNVIVFVYSTFQFIQLL) form a helical membrane-spanning segment. The Cytoplasmic segment spans residues 275–276 (YT). The helical transmembrane segment at 277–297 (VILGISFIPSIFISTWMTFGF) threads the bilayer. At 298–342 (DQLFLYLLLSASTSAATVANMSYTGEMGIQLCSRFDVGSFCSKAD) the chain is on the extracellular side. Residue asparagine 317 is glycosylated (N-linked (GlcNAc...) asparagine). Residues 343–363 (VAVTMSFFAVLAMLSSTILAI) traverse the membrane as a helical segment. Topologically, residues 364-373 (YRIAVLLREY) are cytoplasmic.

This sequence belongs to the Casparian strip membrane proteins (CASP) family. In terms of assembly, homodimer and heterodimers.

It localises to the cell membrane. The polypeptide is CASP-like protein UU6 (Physcomitrium patens (Spreading-leaved earth moss)).